We begin with the raw amino-acid sequence, 167 residues long: Phosphopantetheine adenylyltransferase (167 aa).

Threonine 10 serves as a coordination point for substrate. ATP contacts are provided by residues 10-11 (TF) and histidine 18. Substrate contacts are provided by alanine 77 and arginine 91. ATP-binding positions include 92 to 94 (GLR), glutamate 102, and 127 to 133 (YSFISSS).

It belongs to the bacterial CoaD family. Homohexamer. Mg(2+) serves as cofactor.

It is found in the cytoplasm. It carries out the reaction (R)-4'-phosphopantetheine + ATP + H(+) = 3'-dephospho-CoA + diphosphate. It functions in the pathway cofactor biosynthesis; coenzyme A biosynthesis; CoA from (R)-pantothenate: step 4/5. Functionally, reversibly transfers an adenylyl group from ATP to 4'-phosphopantetheine, yielding dephospho-CoA (dPCoA) and pyrophosphate. The protein is Phosphopantetheine adenylyltransferase of Thermomicrobium roseum (strain ATCC 27502 / DSM 5159 / P-2).